A 128-amino-acid polypeptide reads, in one-letter code: Aspartate 1-decarboxylase (128 aa).

The active-site Schiff-base intermediate with substrate; via pyruvic acid is the Ser25. Pyruvic acid (Ser) is present on Ser25. Thr57 serves as a coordination point for substrate. Tyr58 functions as the Proton donor in the catalytic mechanism. 73 to 75 provides a ligand contact to substrate; that stretch reads GSA.

Belongs to the PanD family. As to quaternary structure, heterooctamer of four alpha and four beta subunits. Requires pyruvate as cofactor. Post-translationally, is synthesized initially as an inactive proenzyme, which is activated by self-cleavage at a specific serine bond to produce a beta-subunit with a hydroxyl group at its C-terminus and an alpha-subunit with a pyruvoyl group at its N-terminus.

It localises to the cytoplasm. It carries out the reaction L-aspartate + H(+) = beta-alanine + CO2. Its pathway is cofactor biosynthesis; (R)-pantothenate biosynthesis; beta-alanine from L-aspartate: step 1/1. Functionally, catalyzes the pyruvoyl-dependent decarboxylation of aspartate to produce beta-alanine. This is Aspartate 1-decarboxylase from Paraburkholderia xenovorans (strain LB400).